Consider the following 394-residue polypeptide: 3-ketosteroid-9-alpha-monooxygenase, oxygenase component (394 aa).

In terms of domain architecture, Rieske spans 27 to 129 (WHCLGLAKDF…TLDQDGLLFV (103 aa)). 4 residues coordinate [2Fe-2S] cluster: cysteine 68, histidine 70, cysteine 87, and histidine 90. The Fe cation site is built by asparagine 175, histidine 181, and histidine 186. Tyrosine 245 contributes to the substrate binding site. Aspartate 305 contacts Fe cation.

As to quaternary structure, homotrimer. The two-component system 3-ketosteroid-9-alpha-monooxygenase is composed of an oxygenase component KshA and a reductase component KshB. Requires [2Fe-2S] cluster as cofactor. The cofactor is Fe cation.

The enzyme catalyses androsta-1,4-diene-3,17-dione + 2 reduced [2Fe-2S]-[ferredoxin] + O2 + 2 H(+) = 9alpha-hydroxyandrosta-1,4-diene-3,17-dione + 2 oxidized [2Fe-2S]-[ferredoxin] + H2O. Its function is as follows. May be involved in the degradation of cholic acid, a steroid acid found predominantly in the bile. In vitro, catalyzes the introduction of a 9alpha-hydroxyl moiety into the ring B of 3-ketosteroid substrates such as 1,4-androstadiene-3,17-dione (ADD), 4-androstene-3,17-dione (AD), 4-androstene-17beta-ol-3-one (testosterone), 4-pregnene-3,20-dione (progesterone), 3-oxo-23,24-bisnorcholesta-4-en-22-oate (4-BNC), 23,24-bisnorcholesta-4-ene-22-oate, 3-oxo-23,24-bisnorcholaesta-1,4-dien-22-oate (1,4-BNC), 23,24-bisnorcholesta-1,4-diene-22-oate and 3-oxo-23,24-bisnorcholesta-1,4-dien-22-oyl-coenzyme A thioester (1,4-BNC-CoA). KshA1 has the highest specificity for steroids possessing an isopropionyl side chain at C17. The polypeptide is 3-ketosteroid-9-alpha-monooxygenase, oxygenase component (Rhodococcus rhodochrous).